We begin with the raw amino-acid sequence, 540 residues long: L-aspartate oxidase (540 aa).

FAD-binding positions include 16 to 19, Lys38, 45 to 52, and Asp223; these read SGAA and STFYAQGG. The Proton donor/acceptor role is filled by Arg290. FAD-binding positions include Glu375 and 391 to 392; that span reads SL.

The protein belongs to the FAD-dependent oxidoreductase 2 family. NadB subfamily. The cofactor is FAD.

It is found in the cytoplasm. It carries out the reaction L-aspartate + O2 = iminosuccinate + H2O2. It catalyses the reaction fumarate + L-aspartate = iminosuccinate + succinate. It participates in cofactor biosynthesis; NAD(+) biosynthesis; iminoaspartate from L-aspartate (oxidase route): step 1/1. Its function is as follows. Catalyzes the oxidation of L-aspartate to iminoaspartate, the first step in the de novo biosynthesis of NAD(+). Can use either oxygen or fumarate as electron acceptors, which allows the enzyme to be functional under aerobic and anaerobic conditions. This is L-aspartate oxidase (nadB) from Escherichia coli O157:H7.